We begin with the raw amino-acid sequence, 80 residues long: Small ribosomal subunit protein uS17 (80 aa).

It belongs to the universal ribosomal protein uS17 family. In terms of assembly, part of the 30S ribosomal subunit.

Its function is as follows. One of the primary rRNA binding proteins, it binds specifically to the 5'-end of 16S ribosomal RNA. In Beijerinckia indica subsp. indica (strain ATCC 9039 / DSM 1715 / NCIMB 8712), this protein is Small ribosomal subunit protein uS17.